The following is a 549-amino-acid chain: Mitochondrial hydroperoxide bicyclase CYP50918A1 (549 aa).

The tract at residues methionine 1–leucine 75 is disordered. Basic and acidic residues predominate over residues serine 8–proline 26. Low complexity predominate over residues alanine 27–proline 41. Cysteine 491 is a heme binding site. Positions aspartate 528–histidine 549 are disordered.

This sequence belongs to the cytochrome P450 family. Heme serves as cofactor.

It localises to the mitochondrion. The enzyme catalyses (13S)-hydroperoxy-(9Z,11E,15Z)-octadecatrienoate = plasmodiophorol A. The catalysed reaction is (13S)-hydroperoxy-(9Z,11E,15Z)-octadecatrienoate = plasmodiophorol B. The protein operates within lipid metabolism; oxylipin biosynthesis. Functionally, cytochrome P450 hydroperoxide bicyclase involved in the metabolism of oxylipins natural products such as egregiachlorides, hybridalactone, ecklonialactones and related bicyclic oxylipins. Isomerizes the hydroperoxides into epoxyalcohols via epoxyallylic radical. Can use alpha-linolenic 13-hydroperoxide ((9Z,11E,13S,15Z)-13-hydroperoxy-9,11,15-octadecatrienoic, 13-HPOT) as preferred substrate to produce the heterobicyclic oxylipins plasmodiophorol A (6-oxabicyclo[3.1.0]hexane) and plasmodiophorol B (2-oxabicyclo[2.2.1]heptane) at the ratio 12:1 and a minor product plasmodiophorol C (cyclopentanediol) formed through the hydrolysis of plasmodiophorols A and B and, to a lower extent, active with linoleic acid 13-hydroperoxide ((9Z,11E,13S)-13-hydroperoxy-9,11-octadecadienoic, 13-HPOD), linoleic acid 9-hydroperoxide ((9S,10E,12Z)-9-hydroperoxy-10,12-octadecadienoic, 9-HPOD) and alpha-linolenic 9-hydroperoxide ((9S,10E,12Z,15Z)-9-hydroperoxy-10,12,15-octadecatrienoic, 9-HPOT). The protein is Mitochondrial hydroperoxide bicyclase CYP50918A1 of Plasmodiophora brassicae (Clubroot disease agent).